The following is a 443-amino-acid chain: 3-phosphoshikimate 1-carboxyvinyltransferase (443 aa).

Residues Lys24, Ser25, and Arg29 each contribute to the 3-phosphoshikimate site. Lys24 lines the phosphoenolpyruvate pocket. The phosphoenolpyruvate site is built by Gly95 and Arg123. Residues Ser167, Gln169, Asp323, and Lys350 each coordinate 3-phosphoshikimate. Gln169 contributes to the phosphoenolpyruvate binding site. Catalysis depends on Asp323, which acts as the Proton acceptor. Arg354 and Arg398 together coordinate phosphoenolpyruvate.

This sequence belongs to the EPSP synthase family. In terms of assembly, monomer.

The protein localises to the cytoplasm. It catalyses the reaction 3-phosphoshikimate + phosphoenolpyruvate = 5-O-(1-carboxyvinyl)-3-phosphoshikimate + phosphate. It participates in metabolic intermediate biosynthesis; chorismate biosynthesis; chorismate from D-erythrose 4-phosphate and phosphoenolpyruvate: step 6/7. Its function is as follows. Catalyzes the transfer of the enolpyruvyl moiety of phosphoenolpyruvate (PEP) to the 5-hydroxyl of shikimate-3-phosphate (S3P) to produce enolpyruvyl shikimate-3-phosphate and inorganic phosphate. The polypeptide is 3-phosphoshikimate 1-carboxyvinyltransferase (Caulobacter vibrioides (strain ATCC 19089 / CIP 103742 / CB 15) (Caulobacter crescentus)).